The following is a 424-amino-acid chain: Glutamyl-tRNA(Gln) amidotransferase subunit D (424 aa).

The tract at residues 58–79 (NTNGGLNGGKEHKTAGEEVQKS) is disordered. A compositionally biased stretch (basic and acidic residues) spans 66–78 (GKEHKTAGEEVQK). The region spanning 84–406 (PKVAILSTGG…LGQTDEFNEA (323 aa)) is the Asparaginase/glutaminase domain. Catalysis depends on residues threonine 94, threonine 170, aspartate 171, and lysine 247.

Belongs to the asparaginase 1 family. GatD subfamily. In terms of assembly, heterodimer of GatD and GatE.

The enzyme catalyses L-glutamyl-tRNA(Gln) + L-glutamine + ATP + H2O = L-glutaminyl-tRNA(Gln) + L-glutamate + ADP + phosphate + H(+). Functionally, allows the formation of correctly charged Gln-tRNA(Gln) through the transamidation of misacylated Glu-tRNA(Gln) in organisms which lack glutaminyl-tRNA synthetase. The reaction takes place in the presence of glutamine and ATP through an activated gamma-phospho-Glu-tRNA(Gln). The GatDE system is specific for glutamate and does not act on aspartate. The polypeptide is Glutamyl-tRNA(Gln) amidotransferase subunit D (Methanosarcina barkeri (strain Fusaro / DSM 804)).